The following is a 608-amino-acid chain: Glutamine--fructose-6-phosphate aminotransferase [isomerizing] (608 aa).

Catalysis depends on cysteine 2, which acts as the Nucleophile; for GATase activity. One can recognise a Glutamine amidotransferase type-2 domain in the interval 2–217 (CGIVGILGRG…DGDWAVLTRA (216 aa)). SIS domains lie at 284–423 (LPFD…ERGK) and 456–598 (LARY…VDQP). Lysine 603 (for Fru-6P isomerization activity) is an active-site residue.

It localises to the cytoplasm. The enzyme catalyses D-fructose 6-phosphate + L-glutamine = D-glucosamine 6-phosphate + L-glutamate. In terms of biological role, involved in the production of the root hair deformation (HAD) factor specifically on soybean. This chain is Glutamine--fructose-6-phosphate aminotransferase [isomerizing] (nodM), found in Bradyrhizobium diazoefficiens (strain JCM 10833 / BCRC 13528 / IAM 13628 / NBRC 14792 / USDA 110).